We begin with the raw amino-acid sequence, 284 residues long: RNase adapter protein RapZ (284 aa).

8–15 (GRSGSGKS) lines the ATP pocket. 56-59 (DVRN) contacts GTP. Residues 266 to 284 (RSRGKNVQSRHRTLEKRKP) form an RNA-binding region.

The protein belongs to the RapZ-like family. RapZ subfamily. Homotrimer.

Its function is as follows. Modulates the synthesis of GlmS, by affecting the processing and stability of the regulatory small RNA GlmZ. When glucosamine-6-phosphate (GlcN6P) concentrations are high in the cell, RapZ binds GlmZ and targets it to cleavage by RNase E. Consequently, GlmZ is inactivated and unable to activate GlmS synthesis. Under low GlcN6P concentrations, RapZ is sequestered and inactivated by an other regulatory small RNA, GlmY, preventing GlmZ degradation and leading to synthesis of GlmS. This chain is RNase adapter protein RapZ, found in Shigella dysenteriae serotype 1 (strain Sd197).